The chain runs to 88 residues: MKTLLLTLVVVTIVCLDFGYARTCLKTPEVKSEPCPPGQEVCYTKAWRDRMCSFRGKVIELGCAATCPRQEPGKEITCCSTDDCNTHP.

A signal peptide spans 1 to 21 (MKTLLLTLVVVTIVCLDFGYA). 4 disulfide bridges follow: cysteine 24–cysteine 42, cysteine 35–cysteine 63, cysteine 67–cysteine 78, and cysteine 79–cysteine 84.

Belongs to the three-finger toxin family. Long-chain subfamily. Type II alpha-neurotoxin sub-subfamily. As to expression, expressed by the venom gland.

It localises to the secreted. In terms of biological role, binds with high affinity to muscular nicotinic acetylcholine receptors (nAChRs), whereas it binds with a low affinity to neuronal alpha-7/CHRNA7 nAChRs. The sequence is that of Long neurotoxin LNTX-2 from Demansia vestigiata (Lesser black whip snake).